We begin with the raw amino-acid sequence, 362 residues long: Peptide chain release factor 1 (362 aa).

Glutamine 238 carries the post-translational modification N5-methylglutamine.

The protein belongs to the prokaryotic/mitochondrial release factor family. In terms of processing, methylated by PrmC. Methylation increases the termination efficiency of RF1.

It localises to the cytoplasm. In terms of biological role, peptide chain release factor 1 directs the termination of translation in response to the peptide chain termination codons UAG and UAA. This chain is Peptide chain release factor 1, found in Psychrobacter arcticus (strain DSM 17307 / VKM B-2377 / 273-4).